The primary structure comprises 142 residues: Rhinocerosin (142 aa).

The first 16 residues, 1–16, serve as a signal peptide directing secretion; it reads MMKLYIVFGFIAFSAA. Positions 17–70 are excised as a propeptide; that stretch reads YVVPEGYYEPEYYPADGYESERVARASPAELIFDEDLADEPEVEEPQYYIRTRR. A disordered region spans residues 72 to 96; it reads LQPGAPNFPMPGSQLPTSITSNIEK. A compositionally biased stretch (polar residues) spans 85–96; sequence QLPTSITSNIEK.

The protein belongs to the coleoptericin family. In terms of tissue distribution, strongly expressed in the fat body and the Malpighian tubules, and weakly expressed in hemocytes and midgut.

It localises to the secreted. Its function is as follows. Has strong antibacterial activity against E.coli, Streptococcus pyogenes, Staphylococcus aureus but not against Pseudomonas aeruginosa. The sequence is that of Rhinocerosin from Oryctes rhinoceros (Coconut rhinoceros beetle).